Reading from the N-terminus, the 252-residue chain is 5-oxoprolinase subunit A (252 aa).

Belongs to the LamB/PxpA family. As to quaternary structure, forms a complex composed of PxpA, PxpB and PxpC.

The enzyme catalyses 5-oxo-L-proline + ATP + 2 H2O = L-glutamate + ADP + phosphate + H(+). Its function is as follows. Catalyzes the cleavage of 5-oxoproline to form L-glutamate coupled to the hydrolysis of ATP to ADP and inorganic phosphate. The polypeptide is 5-oxoprolinase subunit A (Photorhabdus laumondii subsp. laumondii (strain DSM 15139 / CIP 105565 / TT01) (Photorhabdus luminescens subsp. laumondii)).